The sequence spans 4427 residues: Dynein axonemal heavy chain 2 (4427 aa).

Residues 1 to 73 (MSSKAEKKQR…AQSEESVEPE (73 aa)) are disordered. The tract at residues 1–1764 (MSSKAEKKQR…VIRQTNTQFQ (1764 aa)) is stem. Positions 14–23 (RGSSQASWSG) are enriched in polar residues. The segment covering 50–59 (LPKEEPEPRL) has biased composition (basic and acidic residues). Residues 1404–1439 (EDNQVALSTMKASRFVKAFEKDVDHWERCLSLILEV) form a TPR 1 repeat. AAA stretches follow at residues 1765–1986 (YNYE…LLRY), 2046–2273 (ETVE…DNCK), 2378–2625 (RYPP…VFQG), and 2722–2974 (EYNL…LRRH). Residues 1803 to 1810 (GPAGTGKT), 2084 to 2091 (GCTGSGKT), and 2416 to 2423 (GPVGTGKT) each bind ATP. One copy of the TPR 2 repeat lies at 2721 to 2754 (NEYNLSPSVVPMQLVLFREAIEHITRIVRVIGQP). Residue 2762-2769 (GIGGSGRQ) participates in ATP binding. The segment at 2989–3272 (YKKLLGEKRQ…EELRKKSEEM (284 aa)) is stalk. Residues 3012-3049 (FKIDETREKVQVMSLELEDAKKKVAEFQKQCEEYLVII) adopt a coiled-coil conformation. The TPR 3 repeat unit spans residues 3072–3105 (VEEIKCQALADNAQKDLEEALPALEEAMRALESL). 2 coiled-coil regions span residues 3216–3304 (KRIR…EEDL) and 3523–3567 (VRKE…GSLL). AAA stretches follow at residues 3358–3588 (LCNP…EVTE) and 3804–4023 (VTSF…LLSL). TPR repeat units follow at residues 4072–4104 (STPFHRLSALETYFIPKDGSLASYKEYISLLPG) and 4105–4140 (MDPPEAFGQHPNADVASQITEAQTLFDTLLSLQPQI).

Belongs to the dynein heavy chain family. In terms of assembly, part of the axonemal inner dynein arm complex that consists of at least two heavy chains and a number of intermediate and light chains. Interacts with DNAI4. As to expression, expressed primarily in trachea and testis, 2 tissues containing axonemal structures. Also expressed in lung. Expressed in spermatozoa (at protein level).

The protein resides in the cytoplasm. The protein localises to the cytoskeleton. It localises to the cilium axoneme. It is found in the flagellum axoneme. As part of the axonemal inner dynein arm complex plays a central role in ciliary beat. Expressed in sperm flagellum, it is required for sperm motility. Dyneins are microtubule-based molecular motors possessing ATPase activities that can convert the chemical energy of ATP into relative sliding between adjacent microtubule doublets to generate ciliary bending. This is Dynein axonemal heavy chain 2 from Homo sapiens (Human).